A 272-amino-acid polypeptide reads, in one-letter code: Glutamate racemase (272 aa).

Substrate contacts are provided by residues 13–14 and 45–46; these read DS and YG. Cysteine 76 acts as the Proton donor/acceptor in catalysis. Substrate is bound at residue 77–78; it reads NT. Cysteine 187 functions as the Proton donor/acceptor in the catalytic mechanism. Position 188 to 189 (188 to 189) interacts with substrate; that stretch reads TH.

It belongs to the aspartate/glutamate racemases family.

The catalysed reaction is L-glutamate = D-glutamate. It functions in the pathway cell wall biogenesis; peptidoglycan biosynthesis. Provides the (R)-glutamate required for cell wall biosynthesis. The polypeptide is Glutamate racemase (Roseiflexus sp. (strain RS-1)).